Reading from the N-terminus, the 126-residue chain is Large ribosomal subunit protein bL20 (126 aa).

The protein belongs to the bacterial ribosomal protein bL20 family.

Functionally, binds directly to 23S ribosomal RNA and is necessary for the in vitro assembly process of the 50S ribosomal subunit. It is not involved in the protein synthesizing functions of that subunit. In Parafrankia sp. (strain EAN1pec), this protein is Large ribosomal subunit protein bL20.